Consider the following 513-residue polypeptide: ATP synthase subunit alpha (513 aa).

Residue 169–176 (GDRQTGKT) coordinates ATP.

The protein belongs to the ATPase alpha/beta chains family. In terms of assembly, F-type ATPases have 2 components, CF(1) - the catalytic core - and CF(0) - the membrane proton channel. CF(1) has five subunits: alpha(3), beta(3), gamma(1), delta(1), epsilon(1). CF(0) has three main subunits: a(1), b(2) and c(9-12). The alpha and beta chains form an alternating ring which encloses part of the gamma chain. CF(1) is attached to CF(0) by a central stalk formed by the gamma and epsilon chains, while a peripheral stalk is formed by the delta and b chains.

It localises to the cell inner membrane. The catalysed reaction is ATP + H2O + 4 H(+)(in) = ADP + phosphate + 5 H(+)(out). Produces ATP from ADP in the presence of a proton gradient across the membrane. The alpha chain is a regulatory subunit. The protein is ATP synthase subunit alpha of Mannheimia succiniciproducens (strain KCTC 0769BP / MBEL55E).